Here is a 764-residue protein sequence, read N- to C-terminus: Tyrosine-protein phosphatase corkscrew (764 aa).

In terms of domain architecture, SH2 spans 1-95 (WFHGNLSGKE…GTVVHLRQPF (95 aa)). In terms of domain architecture, Tyrosine-protein phosphatase spans 117–522 (FWEEFESLQQ…KFVYYAVQHY (406 aa)). Residues 174–325 (IRLPTDGDLY…LNGEGNQFKT (152 aa)) are PTPase insert (Cys/Ser-rich). A disordered region spans residues 246 to 273 (SKHKRSESMSASANASAAGTGPGTPTAA). The segment covering 255 to 273 (SASANASAAGTGPGTPTAA) has biased composition (low complexity). Substrate contacts are provided by residues aspartate 422, 460-466 (CSAGIGR), and glutamine 507. Cysteine 460 functions as the Phosphocysteine intermediate in the catalytic mechanism. A disordered region spans residues 599-666 (AAKLQPPLPP…NANGNGNILG (68 aa)). Residues 612-666 (SNNNNSSGNSGSYCNSSSSTSTAQHNGVVSSSNNCSSGSGSANSSNANGNGNILG) are compositionally biased toward low complexity.

The protein belongs to the protein-tyrosine phosphatase family. Non-receptor class subfamily.

It localises to the cytoplasm. The catalysed reaction is O-phospho-L-tyrosyl-[protein] + H2O = L-tyrosyl-[protein] + phosphate. Functionally, required in all receptor tyrosine kinase signaling pathways. Functions downstream of the receptor tyrosine kinase torso, acting in concert with D-Raf via tailless. Also functions downstream of Egfr (epidermal growth factor receptor) and btl (fibroblast growth factor receptor). The SH2 domain suggests that csw effects its role by mediating heteromeric protein interactions. Maternally required for normal determination of cell fates at the termini of the embryo. Required for cell fate specification of the ventral ectoderm, in the developing embryonic CNS and for embryonic tracheal cell migration. Functions during imaginal development for proper formation of adult structures such as eyes, aristae, L5 wing vein and the tarsal claw. This Drosophila virilis (Fruit fly) protein is Tyrosine-protein phosphatase corkscrew (csw).